The following is a 454-amino-acid chain: tRNA modification GTPase MnmE (454 aa).

Residues R23, E80, and K120 each coordinate (6S)-5-formyl-5,6,7,8-tetrahydrofolate. Residues 216-377 (GMKVVIAGRP…LRDHLKQSMG (162 aa)) form the TrmE-type G domain. N226 is a binding site for K(+). GTP-binding positions include 226–231 (NAGKSS), 245–251 (TDIAGTT), 270–273 (DTAG), 335–338 (NKAD), and 358–360 (SAR). A Mg(2+)-binding site is contributed by S230. Residues T245, I247, and T250 each contribute to the K(+) site. A Mg(2+)-binding site is contributed by T251. K454 provides a ligand contact to (6S)-5-formyl-5,6,7,8-tetrahydrofolate.

It belongs to the TRAFAC class TrmE-Era-EngA-EngB-Septin-like GTPase superfamily. TrmE GTPase family. Homodimer. Heterotetramer of two MnmE and two MnmG subunits. Requires K(+) as cofactor.

The protein resides in the cytoplasm. Its function is as follows. Exhibits a very high intrinsic GTPase hydrolysis rate. Involved in the addition of a carboxymethylaminomethyl (cmnm) group at the wobble position (U34) of certain tRNAs, forming tRNA-cmnm(5)s(2)U34. This Yersinia pseudotuberculosis serotype IB (strain PB1/+) protein is tRNA modification GTPase MnmE.